A 402-amino-acid chain; its full sequence is 1-deoxy-D-xylulose 5-phosphate reductoisomerase (402 aa).

NADPH contacts are provided by Thr10, Gly11, Ser12, Ile13, Asn38, and Asn124. A 1-deoxy-D-xylulose 5-phosphate-binding site is contributed by Lys125. Glu126 is a binding site for NADPH. Asp150 is a Mn(2+) binding site. 1-deoxy-D-xylulose 5-phosphate is bound by residues Ser151, Glu152, Ser186, and His209. Glu152 lines the Mn(2+) pocket. Gly215 serves as a coordination point for NADPH. Residues Ser222, Asn227, Lys228, and Glu231 each contribute to the 1-deoxy-D-xylulose 5-phosphate site. Glu231 serves as a coordination point for Mn(2+).

The protein belongs to the DXR family. It depends on Mg(2+) as a cofactor. Requires Mn(2+) as cofactor.

The enzyme catalyses 2-C-methyl-D-erythritol 4-phosphate + NADP(+) = 1-deoxy-D-xylulose 5-phosphate + NADPH + H(+). It functions in the pathway isoprenoid biosynthesis; isopentenyl diphosphate biosynthesis via DXP pathway; isopentenyl diphosphate from 1-deoxy-D-xylulose 5-phosphate: step 1/6. Functionally, catalyzes the NADPH-dependent rearrangement and reduction of 1-deoxy-D-xylulose-5-phosphate (DXP) to 2-C-methyl-D-erythritol 4-phosphate (MEP). The chain is 1-deoxy-D-xylulose 5-phosphate reductoisomerase from Vibrio vulnificus (strain YJ016).